The chain runs to 334 residues: S-adenosylmethionine decarboxylase proenzyme 2 (334 aa).

Residue Phe7 participates in substrate binding. Catalysis depends on residues Glu8 and Glu11. Glu67 is a substrate binding site. Catalysis depends on Ser68, which acts as the Schiff-base intermediate with substrate; via pyruvic acid. Position 68 is a pyruvic acid (Ser); by autocatalysis (Ser68). Residue Cys82 is the Proton donor; for catalytic activity of the active site. Substrate is bound at residue Phe223. Catalysis depends on proton acceptor; for processing activity residues Ser229 and His243. Glu247 is a substrate binding site. Ser298 carries the phosphoserine modification.

The protein belongs to the eukaryotic AdoMetDC family. Heterotetramer of two alpha and two beta chains. Requires pyruvate as cofactor. Is synthesized initially as an inactive proenzyme. Formation of the active enzyme involves a self-maturation process in which the active site pyruvoyl group is generated from an internal serine residue via an autocatalytic post-translational modification. Two non-identical subunits are generated from the proenzyme in this reaction, and the pyruvate is formed at the N-terminus of the alpha chain, which is derived from the carboxyl end of the proenzyme. The post-translation cleavage follows an unusual pathway, termed non-hydrolytic serinolysis, in which the side chain hydroxyl group of the serine supplies its oxygen atom to form the C-terminus of the beta chain, while the remainder of the serine residue undergoes an oxidative deamination to produce ammonia and the pyruvoyl group blocking the N-terminus of the alpha chain.

The enzyme catalyses S-adenosyl-L-methionine + H(+) = S-adenosyl 3-(methylsulfanyl)propylamine + CO2. Its pathway is amine and polyamine biosynthesis; S-adenosylmethioninamine biosynthesis; S-adenosylmethioninamine from S-adenosyl-L-methionine: step 1/1. In terms of biological role, essential for biosynthesis of the polyamines spermidine and spermine. Promotes maintenance and self-renewal of embryonic stem cells, by maintaining spermine levels. The chain is S-adenosylmethionine decarboxylase proenzyme 2 (Amd2) from Mus spretus (Western Mediterranean mouse).